Reading from the N-terminus, the 281-residue chain is Splicing regulator RBM11 (281 aa).

Residues 10–87 (RTVFVGNLEA…RPINVQYRFG (78 aa)) enclose the RRM domain. The interval 184–281 (PSSYKWTHQQ…FRKSKKKKRY (98 aa)) is disordered. Composition is skewed to polar residues over residues 187–217 (YKWT…SSLN) and 229–242 (YKWT…SDLY). Residues 245–280 (NKRKRQKQTSDSDSSTDNNRGNECSQKFRKSKKKKR) carry the Bipartite nuclear localization signal motif. Over residues 271–281 (KFRKSKKKKRY) the composition is skewed to basic residues.

In terms of assembly, homodimer. As to expression, expressed in brain, hippocampus, prefrontal cortex, cerebellum, spinal cord, testis, mammary gland, spleen and kidney. Also expressed in fetal brain.

Its subcellular location is the nucleus. The protein resides in the nucleoplasm. It localises to the nucleus speckle. Tissue-specific splicing factor with potential implication in the regulation of alternative splicing during neuron and germ cell differentiation. Antagonizes SRSF1-mediated BCL-X splicing. May affect the choice of alternative 5' splice sites by binding to specific sequences in exons and antagonizing the SR protein SRSF1. The polypeptide is Splicing regulator RBM11 (Homo sapiens (Human)).